Here is a 1273-residue protein sequence, read N- to C-terminus: DNA gyrase subunit A (1273 aa).

The Topo IIA-type catalytic domain maps to 42–931 (LPEVRDGLKP…VDGDVNDEDL (890 aa)). The O-(5'-phospho-DNA)-tyrosine intermediate role is filled by Tyr130. Residues 256-396 (LFGAFISGGF…VQQMLLEFGV (141 aa)) form the DOD-type homing endonuclease domain. The GyrA-box motif lies at 958 to 964 (QKRGGKG).

This sequence belongs to the type II topoisomerase GyrA/ParC subunit family. Heterotetramer, composed of two GyrA and two GyrB chains. In the heterotetramer, GyrA contains the active site tyrosine that forms a transient covalent intermediate with the DNA, while GyrB binds cofactors catalyzes ATP hydrolysis. This protein undergoes a protein self splicing that involves a post-translational excision of the intervening region (intein) followed by peptide ligation.

It is found in the cytoplasm. The catalysed reaction is ATP-dependent breakage, passage and rejoining of double-stranded DNA.. DNA supercoiling is inhibited by fluoroquinolones; IC(50) 1 ug/ml for sitafloxacin. In terms of biological role, a type II topoisomerase that negatively supercoils closed circular double-stranded (ds) DNA in an ATP-dependent manner to modulate DNA topology and maintain chromosomes in an underwound state. Negative supercoiling favors strand separation, and DNA replication, transcription, recombination and repair, all of which involve strand separation. Also able to catalyze the interconversion of other topological isomers of dsDNA rings, including catenanes and knotted rings. Type II topoisomerases break and join 2 DNA strands simultaneously in an ATP-dependent manner. In Mycobacterium leprae (strain TN), this protein is DNA gyrase subunit A.